The primary structure comprises 309 residues: Protein FdhE (309 aa).

It belongs to the FdhE family.

Its subcellular location is the cytoplasm. Functionally, necessary for formate dehydrogenase activity. The polypeptide is Protein FdhE (Salmonella arizonae (strain ATCC BAA-731 / CDC346-86 / RSK2980)).